We begin with the raw amino-acid sequence, 226 residues long: Elongation factor 1-delta (226 aa).

Residues 82-131 (SSVATPPVADTKASAAEDDDDDDVDLFGEETEEEKKASEERAAAVKASGK) form a disordered region. A compositionally biased stretch (acidic residues) spans 97–113 (AEDDDDDDVDLFGEETE). Residues 114–124 (EEKKASEERAA) show a composition bias toward basic and acidic residues.

The protein belongs to the EF-1-beta/EF-1-delta family. EF-1 is composed of 4 subunits: alpha, beta (1B-alpha=beta'), delta (1B-beta), and gamma (1B-gamma).

Its function is as follows. EF-1-beta and EF-1-beta' stimulate the exchange of GDP bound to EF-1-alpha to GTP. In Spuriopimpinella brachycarpa (Chamnamul), this protein is Elongation factor 1-delta.